A 74-amino-acid chain; its full sequence is Putative sulfur carrier protein NMA0882 (74 aa).

Cysteine 13 serves as the catalytic Cysteine persulfide intermediate.

It belongs to the sulfur carrier protein TusA family.

The protein is Putative sulfur carrier protein NMA0882 of Neisseria meningitidis serogroup A / serotype 4A (strain DSM 15465 / Z2491).